Reading from the N-terminus, the 298-residue chain is MEIKNLTTEQRNPASIHIDTVSTVEMVKIMNEEDQKVALAVGNQDEQIARAIDEAANRYKKGGRLIYLGAGTSGRLGVLDAAELVPTYGIKPERAIGLIAGGPGAMYKAVEGAEDDTNLGAEDLKDLNLNSQDIVLGLAASGRTPYVIGGLEYANQIGAFTISIACVKDSEIGKHAEVAIEAVVGPEIVTGSTRMKSGTAQKMILNMISTGVMIRQGKVFENVMIDVMPTNSKLVDRASRIISAVTDATQEEALQTLKKAENNVPLAITMIKTESNKDEAQKLLEQYNGNVSEVIKNN.

The region spanning 55-218 (AANRYKKGGR…STGVMIRQGK (164 aa)) is the SIS domain. Glu-83 acts as the Proton donor in catalysis. The active site involves Glu-114.

This sequence belongs to the GCKR-like family. MurNAc-6-P etherase subfamily. In terms of assembly, homodimer.

It catalyses the reaction N-acetyl-D-muramate 6-phosphate + H2O = N-acetyl-D-glucosamine 6-phosphate + (R)-lactate. Its pathway is amino-sugar metabolism; N-acetylmuramate degradation. Its function is as follows. Specifically catalyzes the cleavage of the D-lactyl ether substituent of MurNAc 6-phosphate, producing GlcNAc 6-phosphate and D-lactate. This Lactobacillus acidophilus (strain ATCC 700396 / NCK56 / N2 / NCFM) protein is N-acetylmuramic acid 6-phosphate etherase.